The chain runs to 49 residues: uncharacterized protein (49 aa).

Residues 16 to 36 (WTCHTGFYLMILLVLFFMYGF) traverse the membrane as a helical segment.

It is found in the cell membrane. This is an uncharacterized protein from Bacillus subtilis (strain 168).